We begin with the raw amino-acid sequence, 131 residues long: Histone H2A type 1-A (131 aa).

The interval 1-23 is disordered; sequence MSGRGKQGGKARAKSKSRSSRAG. An N-acetylserine modification is found at Ser-2. Ser-2 carries the phosphoserine; by RPS6KA5 modification. Citrulline; alternate is present on Arg-4. At Arg-4 the chain carries Symmetric dimethylarginine; by PRMT5; alternate. An N6-(2-hydroxyisobutyryl)lysine modification is found at Lys-6. Over residues 7–19 the composition is skewed to basic residues; sequence QGGKARAKSKSRS. Lys-10 is subject to N6-(2-hydroxyisobutyryl)lysine; alternate. An N6-(beta-hydroxybutyryl)lysine; alternate modification is found at Lys-10. The residue at position 10 (Lys-10) is an N6-lactoyllysine; alternate. An N6-succinyllysine; alternate modification is found at Lys-10. Residue Lys-14 is modified to N6-(beta-hydroxybutyryl)lysine. Glycyl lysine isopeptide (Lys-Gly) (interchain with G-Cter in ubiquitin) cross-links involve residues Lys-14 and Lys-16. At Lys-37 the chain carries N6-(2-hydroxyisobutyryl)lysine; alternate. Position 37 is an N6-(beta-hydroxybutyryl)lysine; alternate (Lys-37). The residue at position 37 (Lys-37) is an N6-crotonyllysine; alternate. N6-(2-hydroxyisobutyryl)lysine is present on residues Lys-75 and Lys-76. At Lys-96 the chain carries N6-(2-hydroxyisobutyryl)lysine; alternate. Lys-96 is subject to N6-(beta-hydroxybutyryl)lysine; alternate. Position 96 is an N6-succinyllysine; alternate (Lys-96). Position 96 is an N6-glutaryllysine; alternate (Lys-96). Gln-105 is subject to N5-methylglutamine. Lys-119 carries the post-translational modification N6-(2-hydroxyisobutyryl)lysine; alternate. Lys-119 bears the N6-(beta-hydroxybutyryl)lysine; alternate mark. N6-crotonyllysine; alternate is present on residues Lys-119 and Lys-120. N6-glutaryllysine; alternate occurs at positions 119 and 120. Lys-120 participates in a covalent cross-link: Glycyl lysine isopeptide (Lys-Gly) (interchain with G-Cter in ubiquitin); alternate. Thr-121 is modified (phosphothreonine; by DCAF1). Position 127 is an N6-crotonyllysine (Lys-127).

Belongs to the histone H2A family. The nucleosome is a histone octamer containing two molecules each of H2A, H2B, H3 and H4 assembled in one H3-H4 heterotetramer and two H2A-H2B heterodimers. The octamer wraps approximately 147 bp of DNA. Deiminated on Arg-4 in granulocytes upon calcium entry. Post-translationally, monoubiquitination of Lys-120 (H2AK119Ub) by RING1, TRIM37 and RNF2/RING2 complex gives a specific tag for epigenetic transcriptional repression and participates in X chromosome inactivation of female mammals. It is involved in the initiation of both imprinted and random X inactivation. Ubiquitinated H2A is enriched in inactive X chromosome chromatin. Ubiquitination of H2A functions downstream of methylation of 'Lys-27' of histone H3 (H3K27me). H2AK119Ub by RNF2/RING2 can also be induced by ultraviolet and may be involved in DNA repair. Monoubiquitination of Lys-120 (H2AK119Ub) by TRIM37 may promote transformation of cells in a number of breast cancers. Following DNA double-strand breaks (DSBs), it is ubiquitinated through 'Lys-63' linkage of ubiquitin moieties by the E2 ligase UBE2N and the E3 ligases RNF8 and RNF168, leading to the recruitment of repair proteins to sites of DNA damage. Ubiquitination at Lys-14 and Lys-16 (H2AK13Ub and H2AK15Ub, respectively) in response to DNA damage is initiated by RNF168 that mediates monoubiquitination at these 2 sites, and 'Lys-63'-linked ubiquitin are then conjugated to monoubiquitin; RNF8 is able to extend 'Lys-63'-linked ubiquitin chains in vitro. Deubiquitinated by USP51 at Lys-14 and Lys-16 (H2AK13Ub and H2AK15Ub, respectively) after damaged DNA is repaired. H2AK119Ub and ionizing radiation-induced 'Lys-63'-linked ubiquitination (H2AK13Ub and H2AK15Ub) are distinct events. In terms of processing, phosphorylation on Ser-2 (H2AS1ph) is enhanced during mitosis. Phosphorylation on Ser-2 by RPS6KA5/MSK1 directly represses transcription. Acetylation of H3 inhibits Ser-2 phosphorylation by RPS6KA5/MSK1. Phosphorylation at Thr-121 (H2AT120ph) by DCAF1 is present in the regulatory region of many tumor suppresor genes and down-regulates their transcription. Glutamine methylation at Gln-105 (H2AQ104me) by FBL is specifically dedicated to polymerase I. It is present at 35S ribosomal DNA locus and impairs binding of the FACT complex. Post-translationally, symmetric dimethylation on Arg-4 by the PRDM1/PRMT5 complex may play a crucial role in the germ-cell lineage. In terms of processing, crotonylation (Kcr) is specifically present in male germ cells and marks testis-specific genes in post-meiotic cells, including X-linked genes that escape sex chromosome inactivation in haploid cells. Crotonylation marks active promoters and enhancers and confers resistance to transcriptional repressors. It is also associated with post-meiotically activated genes on autosomes. Lactylated in macrophages by EP300/P300 by using lactoyl-CoA directly derived from endogenous or exogenous lactate, leading to stimulates gene transcription.

The protein localises to the nucleus. The protein resides in the chromosome. In terms of biological role, core component of nucleosome. Nucleosomes wrap and compact DNA into chromatin, limiting DNA accessibility to the cellular machineries which require DNA as a template. Histones thereby play a central role in transcription regulation, DNA repair, DNA replication and chromosomal stability. DNA accessibility is regulated via a complex set of post-translational modifications of histones, also called histone code, and nucleosome remodeling. The protein is Histone H2A type 1-A of Homo sapiens (Human).